The chain runs to 108 residues: UPF0060 membrane protein CKO_01576 (108 aa).

Transmembrane regions (helical) follow at residues 6 to 26 (LLFF…WLWL), 29 to 49 (GATA…VWLL), 61 to 81 (AAYG…VDGV), and 85 to 105 (LYDW…VAGW).

This sequence belongs to the UPF0060 family.

The protein resides in the cell inner membrane. This chain is UPF0060 membrane protein CKO_01576, found in Citrobacter koseri (strain ATCC BAA-895 / CDC 4225-83 / SGSC4696).